Consider the following 201-residue polypeptide: Ribosome maturation factor RimM (201 aa).

The 75-residue stretch at 92–166 (DEDEFYHADL…RVVVEPPANF (75 aa)) folds into the PRC barrel domain. A disordered region spans residues 169 to 201 (PAGPQPAEGEEMPDGALEALEGEEAGAGTAPQP).

It belongs to the RimM family. Binds ribosomal protein uS19.

It localises to the cytoplasm. Functionally, an accessory protein needed during the final step in the assembly of 30S ribosomal subunit, possibly for assembly of the head region. Essential for efficient processing of 16S rRNA. May be needed both before and after RbfA during the maturation of 16S rRNA. It has affinity for free ribosomal 30S subunits but not for 70S ribosomes. In Rhodospirillum centenum (strain ATCC 51521 / SW), this protein is Ribosome maturation factor RimM.